The chain runs to 283 residues: Pantothenate synthetase (283 aa).

26–33 (MGNLHEGH) contributes to the ATP binding site. Catalysis depends on His33, which acts as the Proton donor. (R)-pantoate is bound at residue Gln57. Gln57 is a beta-alanine binding site. 144–147 (GKKD) contacts ATP. Residue Gln150 coordinates (R)-pantoate. Residues Val173 and 181 to 184 (LSSR) contribute to the ATP site.

This sequence belongs to the pantothenate synthetase family. In terms of assembly, homodimer.

It localises to the cytoplasm. It catalyses the reaction (R)-pantoate + beta-alanine + ATP = (R)-pantothenate + AMP + diphosphate + H(+). It participates in cofactor biosynthesis; (R)-pantothenate biosynthesis; (R)-pantothenate from (R)-pantoate and beta-alanine: step 1/1. Catalyzes the condensation of pantoate with beta-alanine in an ATP-dependent reaction via a pantoyl-adenylate intermediate. The sequence is that of Pantothenate synthetase from Ralstonia nicotianae (strain ATCC BAA-1114 / GMI1000) (Ralstonia solanacearum).